The primary structure comprises 362 residues: MTRPKSFRINAKNYFLTYPKCSLTKEEALSQLNNLETPTSKKYIKVCRELHENGEPHLHVLIQFEGKFQCKNQRFFDLVSPTRSAHFHPNIQGAKSSSDVKSYLEKDGDTLEWGEFQIDGRSARGGQQSANDAYAQALNTGSKSEALNVLRELAPKDYVLQFHNLNSNLDRIFTPPLEVYVSPFLSSSFDRVPEELEEWVAENVKDAAARPLRPISIVIEGESRTGKTVWARSLGPHNYLCGHLDLSPKVYSNDAWYNVIDDVDPHYLKHFKEFMGAQRDWQSNTKYGKPVQIKGGIPTIFLCNPGPNSSYKEYLDEEKNSALKAWALKNAEFITLNEPLYSGTYQGPTQNSEEEVHPEEEN.

One can recognise a CRESS-DNA virus Rep endonuclease domain in the interval 8–116 (RINAKNYFLT…DGDTLEWGEF (109 aa)). The RCR-1 motif lies at 15–18 (FLTY). A divalent metal cation-binding residues include Glu49, His57, and His59. An RCR-2 motif is present at residues 57 to 59 (HLH). The For DNA cleavage activity role is filled by Tyr103. Residues 103–106 (YLEK) carry the RCR-3 motif. A divalent metal cation is bound at residue Asp107. Residues 143-153 (KSEALNVLREL) form a binding to RBR1 region. Positions 156–176 (KDYVLQFHNLNSNLDRIFTPP) are oligomerization. 221–228 (GESRTGKT) lines the ATP pocket. Residues 341 to 362 (YSGTYQGPTQNSEEEVHPEEEN) are disordered. Residues 352–362 (SEEEVHPEEEN) are compositionally biased toward acidic residues.

Belongs to the geminiviridae Rep protein family. Homooligomer. Interacts with the replication enhancer protein (REn). Interacts with host retinoblastoma-related protein 1 (RBR1), and may thereby induce the transcription of host replicative enzymes even if the cell is not dividing anymore. Interacts with host PCNA. Interacts with host SCE1 protein. Binds to host RAD54 protein to ensure geminiviral replication. The cofactor is Mg(2+). It depends on Mn(2+) as a cofactor.

The protein resides in the host nucleus. In terms of biological role, essential for the replication of viral ssDNA. The closed circular ssDNA genome is first converted to a superhelical dsDNA. Rep binds a specific region at the genome origin of replication. It introduces an endonucleolytic nick within the conserved sequence 5'-TAATATTAC-3' in the intergenic region of the genome present in all geminiviruses, thereby initiating the rolling circle replication (RCR). Following cleavage, binds covalently to the 5'-phosphate of DNA as a tyrosyl ester. The cleavage gives rise to a free 3'-OH that serves as a primer for the cellular DNA polymerase. The polymerase synthesizes the (+) strand DNA by rolling circle mechanism. After one round of replication, a Rep-catalyzed nucleotidyl transfer reaction releases a circular single-stranded virus genome, thereby terminating the replication. Displays origin-specific DNA cleavage, nucleotidyl transferase, ATPase and helicase activities. The chain is Replication-associated protein from Cynanchum acutum (Little mallow).